A 334-amino-acid polypeptide reads, in one-letter code: Glycerol-3-phosphate dehydrogenase [NAD(P)+] (334 aa).

Trp-13, Arg-33, and Lys-106 together coordinate NADPH. Lys-106, Gly-137, and Ser-139 together coordinate sn-glycerol 3-phosphate. Ala-141 is an NADPH binding site. Lys-192, Asp-245, Ser-255, Arg-256, and Asn-257 together coordinate sn-glycerol 3-phosphate. Residue Lys-192 is the Proton acceptor of the active site. Arg-256 is an NADPH binding site. NADPH contacts are provided by Val-280 and Glu-282.

It belongs to the NAD-dependent glycerol-3-phosphate dehydrogenase family.

It is found in the cytoplasm. It carries out the reaction sn-glycerol 3-phosphate + NAD(+) = dihydroxyacetone phosphate + NADH + H(+). The catalysed reaction is sn-glycerol 3-phosphate + NADP(+) = dihydroxyacetone phosphate + NADPH + H(+). It functions in the pathway membrane lipid metabolism; glycerophospholipid metabolism. Functionally, catalyzes the reduction of the glycolytic intermediate dihydroxyacetone phosphate (DHAP) to sn-glycerol 3-phosphate (G3P), the key precursor for phospholipid synthesis. In Chlamydia abortus (strain DSM 27085 / S26/3) (Chlamydophila abortus), this protein is Glycerol-3-phosphate dehydrogenase [NAD(P)+].